A 310-amino-acid chain; its full sequence is Thiamine-monophosphate kinase (310 aa).

Residues Asp26, Thr40, Ser41, and Asp42 each contribute to the Mg(2+) site. Asp49 is a binding site for substrate. 2 residues coordinate Mg(2+): Asp70 and Asp118. Residues 117-118 (GD) and Arg141 contribute to the ATP site. Position 202 (Asp202) interacts with Mg(2+). Position 204 (Ser204) interacts with ATP. Asp205 contacts Mg(2+). Substrate contacts are provided by Glu251 and Trp299.

Belongs to the thiamine-monophosphate kinase family.

It carries out the reaction thiamine phosphate + ATP = thiamine diphosphate + ADP. It functions in the pathway cofactor biosynthesis; thiamine diphosphate biosynthesis; thiamine diphosphate from thiamine phosphate: step 1/1. Its function is as follows. Catalyzes the ATP-dependent phosphorylation of thiamine-monophosphate (TMP) to form thiamine-pyrophosphate (TPP), the active form of vitamin B1. This chain is Thiamine-monophosphate kinase, found in Pyrococcus abyssi (strain GE5 / Orsay).